The following is a 259-amino-acid chain: GTP cyclohydrolase FolE2 (259 aa).

The protein belongs to the GTP cyclohydrolase IV family.

It catalyses the reaction GTP + H2O = 7,8-dihydroneopterin 3'-triphosphate + formate + H(+). It functions in the pathway cofactor biosynthesis; 7,8-dihydroneopterin triphosphate biosynthesis; 7,8-dihydroneopterin triphosphate from GTP: step 1/1. In terms of biological role, converts GTP to 7,8-dihydroneopterin triphosphate. The protein is GTP cyclohydrolase FolE2 of Thermosipho africanus (strain TCF52B).